A 457-amino-acid chain; its full sequence is Nuclear distribution protein PAC1 (457 aa).

Residues 73 to 106 (SSIVRLQRRIIELEKEIQELTDENENLRENGPSS) adopt a coiled-coil conformation. 7 WD repeats span residues 126–165 (SAGASVTSVKLHPELPLVFIATDAGKLQCYDLMNYTMPVA), 169–211 (AHMR…LQLI), 216–257 (GHEH…CLKS), 260–299 (PHTEWVRCLDVMGDFVVTGSNDCTVRLSHWPTGRSLSFGT), 322–362 (SHRF…FVAH), 382–419 (GHSSWVRDVRVRGKHAFSCSDDRSIKVWDLSTCEVVRS), and 423–457 (LHSGFINCIDIDCGGLNRQLLVSGGADGKLVILMK).

This sequence belongs to the WD repeat LIS1/nudF family. In terms of assembly, self-associates. Interacts with NDL1 and dynein.

The protein resides in the cytoplasm. The protein localises to the cytoskeleton. It localises to the spindle pole. Its function is as follows. Positively regulates the activity of the minus-end directed microtubule motor protein dynein. Plays a central role in positioning the mitotic spindle at the bud neck during cell division. Targets cytoplasmic dynein to microtubule plus ends, thereby promoting dynein-mediated microtubule sliding along the bud cortex and consequently the movement of the mitotic spindle to the bud neck. The chain is Nuclear distribution protein PAC1 from Lachancea thermotolerans (strain ATCC 56472 / CBS 6340 / NRRL Y-8284) (Yeast).